Here is a 154-residue protein sequence, read N- to C-terminus: 6,7-dimethyl-8-ribityllumazine synthase (154 aa).

5-amino-6-(D-ribitylamino)uracil-binding positions include F22, 56-58, and 80-82; these read AFE and AVI. 85 to 86 lines the (2S)-2-hydroxy-3-oxobutyl phosphate pocket; the sequence is AT. Catalysis depends on H88, which acts as the Proton donor. Residue F113 coordinates 5-amino-6-(D-ribitylamino)uracil. R127 contributes to the (2S)-2-hydroxy-3-oxobutyl phosphate binding site.

Belongs to the DMRL synthase family.

The catalysed reaction is (2S)-2-hydroxy-3-oxobutyl phosphate + 5-amino-6-(D-ribitylamino)uracil = 6,7-dimethyl-8-(1-D-ribityl)lumazine + phosphate + 2 H2O + H(+). Its pathway is cofactor biosynthesis; riboflavin biosynthesis; riboflavin from 2-hydroxy-3-oxobutyl phosphate and 5-amino-6-(D-ribitylamino)uracil: step 1/2. Its function is as follows. Catalyzes the formation of 6,7-dimethyl-8-ribityllumazine by condensation of 5-amino-6-(D-ribitylamino)uracil with 3,4-dihydroxy-2-butanone 4-phosphate. This is the penultimate step in the biosynthesis of riboflavin. The polypeptide is 6,7-dimethyl-8-ribityllumazine synthase (Clostridium botulinum (strain Okra / Type B1)).